We begin with the raw amino-acid sequence, 180 residues long: Ribulose bisphosphate carboxylase small subunit, chloroplastic 1 (180 aa).

The N-terminal 56 residues, 1 to 56, are a transit peptide targeting the chloroplast; the sequence is MASSVLSSAAVATRSNVAQANMVAPFTGLKSAASFPVSRKQNLDITSIASNGGRVQ.

This sequence belongs to the RuBisCO small chain family. As to quaternary structure, heterohexadecamer of 8 large and 8 small subunits.

Its subcellular location is the plastid. The protein resides in the chloroplast. RuBisCO catalyzes two reactions: the carboxylation of D-ribulose 1,5-bisphosphate, the primary event in carbon dioxide fixation, as well as the oxidative fragmentation of the pentose substrate. Both reactions occur simultaneously and in competition at the same active site. Although the small subunit is not catalytic it is essential for maximal activity. The sequence is that of Ribulose bisphosphate carboxylase small subunit, chloroplastic 1 from Nicotiana sylvestris (Wood tobacco).